A 115-amino-acid polypeptide reads, in one-letter code: Kunitz-type trypsin inhibitor 1 (115 aa).

It belongs to the protease inhibitor I3 (leguminous Kunitz-type inhibitor) family.

Its function is as follows. Exhibits Kunitz trypsin protease inhibitor activity. This Selenicereus undatus (Pitahaya) protein is Kunitz-type trypsin inhibitor 1.